A 104-amino-acid chain; its full sequence is Large ribosomal subunit protein uL24 (104 aa).

This sequence belongs to the universal ribosomal protein uL24 family. In terms of assembly, part of the 50S ribosomal subunit.

Functionally, one of two assembly initiator proteins, it binds directly to the 5'-end of the 23S rRNA, where it nucleates assembly of the 50S subunit. One of the proteins that surrounds the polypeptide exit tunnel on the outside of the subunit. The chain is Large ribosomal subunit protein uL24 from Shigella dysenteriae serotype 1 (strain Sd197).